The sequence spans 295 residues: Protease HtpX (295 aa).

The next 2 helical transmembrane spans lie at 4–24 (ILLF…TLSL) and 41–61 (GQLL…SLFI). Residue His-147 coordinates Zn(2+). Glu-148 is an active-site residue. Residue His-151 participates in Zn(2+) binding. 2 consecutive transmembrane segments (helical) span residues 158-178 (VTMA…ARII) and 198-218 (FVAT…IVMW). Residue Glu-224 coordinates Zn(2+).

Belongs to the peptidase M48B family. Requires Zn(2+) as cofactor.

The protein localises to the cell inner membrane. The sequence is that of Protease HtpX from Pseudomonas entomophila (strain L48).